Reading from the N-terminus, the 426-residue chain is Serine--tRNA ligase (426 aa).

Residue 235-237 (TAE) participates in L-serine binding. An ATP-binding site is contributed by 266 to 268 (RRE). Residue glutamate 289 coordinates L-serine. 353–356 (EISS) provides a ligand contact to ATP. Serine 389 contributes to the L-serine binding site.

It belongs to the class-II aminoacyl-tRNA synthetase family. Type-1 seryl-tRNA synthetase subfamily. In terms of assembly, homodimer. The tRNA molecule binds across the dimer.

The protein resides in the cytoplasm. It catalyses the reaction tRNA(Ser) + L-serine + ATP = L-seryl-tRNA(Ser) + AMP + diphosphate + H(+). It carries out the reaction tRNA(Sec) + L-serine + ATP = L-seryl-tRNA(Sec) + AMP + diphosphate + H(+). It functions in the pathway aminoacyl-tRNA biosynthesis; selenocysteinyl-tRNA(Sec) biosynthesis; L-seryl-tRNA(Sec) from L-serine and tRNA(Sec): step 1/1. Catalyzes the attachment of serine to tRNA(Ser). Is also able to aminoacylate tRNA(Sec) with serine, to form the misacylated tRNA L-seryl-tRNA(Sec), which will be further converted into selenocysteinyl-tRNA(Sec). The sequence is that of Serine--tRNA ligase from Trichormus variabilis (strain ATCC 29413 / PCC 7937) (Anabaena variabilis).